Here is a 237-residue protein sequence, read N- to C-terminus: Endoglucanase-1 (237 aa).

Residues 1–16 (MKAFHLLAALAGAAVA) form the signal peptide. Pyrrolidone carboxylic acid is present on glutamine 17.

This sequence belongs to the glycosyl hydrolase 12 (cellulase H) family.

Its subcellular location is the secreted. It carries out the reaction Endohydrolysis of (1-&gt;4)-beta-D-glucosidic linkages in cellulose, lichenin and cereal beta-D-glucans.. In Aspergillus aculeatus, this protein is Endoglucanase-1.